Consider the following 153-residue polypeptide: Endoribonuclease YbeY (153 aa).

Zn(2+)-binding residues include His-116, His-120, and His-126.

It belongs to the endoribonuclease YbeY family. It depends on Zn(2+) as a cofactor.

The protein resides in the cytoplasm. In terms of biological role, single strand-specific metallo-endoribonuclease involved in late-stage 70S ribosome quality control and in maturation of the 3' terminus of the 16S rRNA. The sequence is that of Endoribonuclease YbeY from Clavibacter sepedonicus (Clavibacter michiganensis subsp. sepedonicus).